Consider the following 733-residue polypeptide: Catalase-peroxidase (733 aa).

The interval 1 to 25 (MNEERKCPITGATHKPSAEKGRSNH) is disordered. The span at 16-25 (PSAEKGRSNH) shows a compositional bias: basic and acidic residues. Residues 96–219 (WHSAGTYRTS…LAAVQMGLIY (124 aa)) constitute a cross-link (tryptophyl-tyrosyl-methioninium (Trp-Tyr) (with M-245)). Residue H97 is the Proton acceptor of the active site. The segment at residues 219–245 (YVNPEGPNGKPDPLAAAKDIRETFARM) is a cross-link (tryptophyl-tyrosyl-methioninium (Tyr-Met) (with W-96)). A heme b-binding site is contributed by H260.

Belongs to the peroxidase family. Peroxidase/catalase subfamily. Homodimer or homotetramer. Heme b is required as a cofactor. Formation of the three residue Trp-Tyr-Met cross-link is important for the catalase, but not the peroxidase activity of the enzyme.

The catalysed reaction is H2O2 + AH2 = A + 2 H2O. It carries out the reaction 2 H2O2 = O2 + 2 H2O. In terms of biological role, bifunctional enzyme with both catalase and broad-spectrum peroxidase activity. This chain is Catalase-peroxidase, found in Chlorobium chlorochromatii (strain CaD3).